Reading from the N-terminus, the 878-residue chain is Phosphoenolpyruvate carboxylase (878 aa).

Active-site residues include His-137 and Lys-545.

It belongs to the PEPCase type 1 family. Mg(2+) is required as a cofactor.

It carries out the reaction oxaloacetate + phosphate = phosphoenolpyruvate + hydrogencarbonate. In terms of biological role, forms oxaloacetate, a four-carbon dicarboxylic acid source for the tricarboxylic acid cycle. The sequence is that of Phosphoenolpyruvate carboxylase from Yersinia pseudotuberculosis serotype O:1b (strain IP 31758).